A 368-amino-acid chain; its full sequence is Quinolinate synthase (368 aa).

Residues H46 and S63 each contribute to the iminosuccinate site. C110 lines the [4Fe-4S] cluster pocket. Residues 141-143 (YVN) and S162 each bind iminosuccinate. Residue C230 participates in [4Fe-4S] cluster binding. Residues 256 to 258 (HPE) and T273 contribute to the iminosuccinate site. C320 contacts [4Fe-4S] cluster.

This sequence belongs to the quinolinate synthase family. Type 3 subfamily. [4Fe-4S] cluster serves as cofactor.

It is found in the cytoplasm. The catalysed reaction is iminosuccinate + dihydroxyacetone phosphate = quinolinate + phosphate + 2 H2O + H(+). It participates in cofactor biosynthesis; NAD(+) biosynthesis; quinolinate from iminoaspartate: step 1/1. Catalyzes the condensation of iminoaspartate with dihydroxyacetone phosphate to form quinolinate. The chain is Quinolinate synthase from Bacillus thuringiensis subsp. konkukian (strain 97-27).